A 394-amino-acid chain; its full sequence is Arogenate dehydratase 2 (394 aa).

The tract at residues 1–24 (MAATTTLRSPKIPHPPPESTPSNL) is disordered. The N-terminal 47 residues, 1 to 47 (MAATTTLRSPKIPHPPPESTPSNLSYLSQISLTPVPKRRRFISIYAC), are a transit peptide targeting the chloroplast. In terms of domain architecture, Prephenate dehydratase spans 108–283 (RVAYQGVRGA…NVTRFLMLAR (176 aa)). One can recognise an ACT domain in the interval 297 to 388 (SVVFSLDEGP…TFLRVLGSYP (92 aa)).

As to expression, expressed at low levels in petals (corollas and tubes), stems, leaves, pistils, stamens, ovaries and sepals.

It is found in the plastid. The protein resides in the chloroplast stroma. The enzyme catalyses prephenate + H(+) = 3-phenylpyruvate + CO2 + H2O. It catalyses the reaction L-arogenate + H(+) = L-phenylalanine + CO2 + H2O. Its pathway is amino-acid biosynthesis; L-phenylalanine biosynthesis; L-phenylalanine from L-arogenate: step 1/1. Converts the prephenate and L-arogenate produced from the shikimate-chorismate pathway into 3-phenylpyruvate and phenylalanine (Phe), respectively. Involved in floral volatile benzenoids and phenylpropanoids (FVBP) production. The sequence is that of Arogenate dehydratase 2 from Petunia hybrida (Petunia).